Consider the following 110-residue polypeptide: Large ribosomal subunit protein P1B (110 aa).

The segment covering 69 to 85 (PAAGGAGAPAAAAGGEA) has biased composition (low complexity). The tract at residues 69-110 (PAAGGAGAPAAAAGGEAAAEEQKEEAKEEEESDEDMGFGLFD) is disordered. A compositionally biased stretch (acidic residues) spans 95-104 (KEEEESDEDM).

This sequence belongs to the eukaryotic ribosomal protein P1/P2 family. As to quaternary structure, component of the large ribosomal subunit (LSU). Mature yeast ribosomes consist of a small (40S) and a large (60S) subunit. The 40S small subunit contains 1 molecule of ribosomal RNA (18S rRNA) and at least 33 different proteins. The large 60S subunit contains 3 rRNA molecules (25S, 5.8S and 5S rRNA) and at least 46 different proteins. The acidic ribosomal P-proteins form the stalk structure of the 60S subunit. They are organized as a pentameric complex in which uL10/P0 interacts with 2 heterodimers of P1 and P2 proteins.

It localises to the cytoplasm. Component of the ribosome, a large ribonucleoprotein complex responsible for the synthesis of proteins in the cell. The small ribosomal subunit (SSU) binds messenger RNAs (mRNAs) and translates the encoded message by selecting cognate aminoacyl-transfer RNA (tRNA) molecules. The large subunit (LSU) contains the ribosomal catalytic site termed the peptidyl transferase center (PTC), which catalyzes the formation of peptide bonds, thereby polymerizing the amino acids delivered by tRNAs into a polypeptide chain. The nascent polypeptides leave the ribosome through a tunnel in the LSU and interact with protein factors that function in enzymatic processing, targeting, and the membrane insertion of nascent chains at the exit of the ribosomal tunnel. This chain is Large ribosomal subunit protein P1B (rpp102), found in Schizosaccharomyces pombe (strain 972 / ATCC 24843) (Fission yeast).